A 330-amino-acid polypeptide reads, in one-letter code: Ketol-acid reductoisomerase (NADP(+)) (330 aa).

Residues 3–184 form the KARI N-terminal Rossmann domain; sequence LSVYYDKDID…GGGRMGVLET (182 aa). Residues 26–29, Ser52, and Ser54 contribute to the NADP(+) site; that span reads YGTQ. The active site involves His109. Gly135 is a binding site for NADP(+). Residues 185–329 enclose the KARI C-terminal knotted domain; it reads SFKEECESDL…EILRTPFNHE (145 aa). Positions 193, 197, 229, and 233 each coordinate Mg(2+). Ser254 is a binding site for substrate.

Belongs to the ketol-acid reductoisomerase family. Requires Mg(2+) as cofactor.

The enzyme catalyses (2R)-2,3-dihydroxy-3-methylbutanoate + NADP(+) = (2S)-2-acetolactate + NADPH + H(+). It catalyses the reaction (2R,3R)-2,3-dihydroxy-3-methylpentanoate + NADP(+) = (S)-2-ethyl-2-hydroxy-3-oxobutanoate + NADPH + H(+). It functions in the pathway amino-acid biosynthesis; L-isoleucine biosynthesis; L-isoleucine from 2-oxobutanoate: step 2/4. It participates in amino-acid biosynthesis; L-valine biosynthesis; L-valine from pyruvate: step 2/4. Involved in the biosynthesis of branched-chain amino acids (BCAA). Catalyzes an alkyl-migration followed by a ketol-acid reduction of (S)-2-acetolactate (S2AL) to yield (R)-2,3-dihydroxy-isovalerate. In the isomerase reaction, S2AL is rearranged via a Mg-dependent methyl migration to produce 3-hydroxy-3-methyl-2-ketobutyrate (HMKB). In the reductase reaction, this 2-ketoacid undergoes a metal-dependent reduction by NADPH to yield (R)-2,3-dihydroxy-isovalerate. This is Ketol-acid reductoisomerase (NADP(+)) from Helicobacter acinonychis (strain Sheeba).